A 301-amino-acid polypeptide reads, in one-letter code: Probable alpha-L-glutamate ligase (301 aa).

Positions 104-287 (LQLLSRRGVG…VAGLIIQYLE (184 aa)) constitute an ATP-grasp domain. Residues Lys141, 178–179 (EY), Asp187, and 211–213 (RSN) contribute to the ATP site. Mg(2+) is bound by residues Asp248, Glu260, and Asn262. Residues Asp248, Glu260, and Asn262 each coordinate Mn(2+).

The protein belongs to the RimK family. Mg(2+) is required as a cofactor. Requires Mn(2+) as cofactor.

This Stutzerimonas stutzeri (strain A1501) (Pseudomonas stutzeri) protein is Probable alpha-L-glutamate ligase.